A 483-amino-acid polypeptide reads, in one-letter code: Aspartyl/glutamyl-tRNA(Asn/Gln) amidotransferase subunit B (483 aa).

The protein belongs to the GatB/GatE family. GatB subfamily. As to quaternary structure, heterotrimer of A, B and C subunits.

The enzyme catalyses L-glutamyl-tRNA(Gln) + L-glutamine + ATP + H2O = L-glutaminyl-tRNA(Gln) + L-glutamate + ADP + phosphate + H(+). It catalyses the reaction L-aspartyl-tRNA(Asn) + L-glutamine + ATP + H2O = L-asparaginyl-tRNA(Asn) + L-glutamate + ADP + phosphate + 2 H(+). Functionally, allows the formation of correctly charged Asn-tRNA(Asn) or Gln-tRNA(Gln) through the transamidation of misacylated Asp-tRNA(Asn) or Glu-tRNA(Gln) in organisms which lack either or both of asparaginyl-tRNA or glutaminyl-tRNA synthetases. The reaction takes place in the presence of glutamine and ATP through an activated phospho-Asp-tRNA(Asn) or phospho-Glu-tRNA(Gln). The protein is Aspartyl/glutamyl-tRNA(Asn/Gln) amidotransferase subunit B of Rickettsia africae (strain ESF-5).